Consider the following 223-residue polypeptide: Chalcone--flavanone isomerase (223 aa).

Substrate is bound by residues Thr-50, Asn-114, and Thr-191.

The protein belongs to the chalcone isomerase family.

It carries out the reaction a chalcone = a flavanone.. Its pathway is secondary metabolite biosynthesis; flavonoid biosynthesis. In terms of biological role, catalyzes the intramolecular cyclization of bicyclic chalcones into tricyclic (S)-flavanones. Responsible for the isomerization of 4,2',4',6'-tetrahydroxychalcone (also termed chalcone) into naringenin. The chain is Chalcone--flavanone isomerase (CHI) from Pisum sativum (Garden pea).